Reading from the N-terminus, the 140-residue chain is Nucleoside diphosphate kinase (140 aa).

Lys-10, Phe-58, Arg-86, Thr-92, Arg-103, and Asn-113 together coordinate ATP. His-116 serves as the catalytic Pros-phosphohistidine intermediate.

It belongs to the NDK family. Homotetramer. It depends on Mg(2+) as a cofactor.

It is found in the cytoplasm. The enzyme catalyses a 2'-deoxyribonucleoside 5'-diphosphate + ATP = a 2'-deoxyribonucleoside 5'-triphosphate + ADP. The catalysed reaction is a ribonucleoside 5'-diphosphate + ATP = a ribonucleoside 5'-triphosphate + ADP. Functionally, major role in the synthesis of nucleoside triphosphates other than ATP. The ATP gamma phosphate is transferred to the NDP beta phosphate via a ping-pong mechanism, using a phosphorylated active-site intermediate. This chain is Nucleoside diphosphate kinase, found in Anaplasma phagocytophilum (strain HZ).